Reading from the N-terminus, the 329-residue chain is Serpentine receptor class alpha-2 (329 aa).

A run of 7 helical transmembrane segments spans residues 25–45 (FVYL…VKIL), 57–77 (ILLV…GIEA), 104–124 (YYKI…GLLI), 144–164 (CAVI…LIVW), 188–208 (HYFT…TFIL), 240–260 (FLTV…IVLV), and 273–293 (LLVV…VILV).

Belongs to the nematode receptor-like protein sra family.

It localises to the membrane. The chain is Serpentine receptor class alpha-2 (sra-2) from Caenorhabditis elegans.